Consider the following 150-residue polypeptide: Large ribosomal subunit protein uL13 (150 aa).

It belongs to the universal ribosomal protein uL13 family. In terms of assembly, part of the 50S ribosomal subunit.

In terms of biological role, this protein is one of the early assembly proteins of the 50S ribosomal subunit, although it is not seen to bind rRNA by itself. It is important during the early stages of 50S assembly. In Chlamydia abortus (strain DSM 27085 / S26/3) (Chlamydophila abortus), this protein is Large ribosomal subunit protein uL13.